We begin with the raw amino-acid sequence, 317 residues long: tRNA N6-adenosine threonylcarbamoyltransferase (317 aa).

Fe cation-binding residues include H110 and H114. Substrate is bound by residues 132–136 (VVSGG), D165, G178, D182, and N271. D300 is a Fe cation binding site.

It belongs to the KAE1 / TsaD family. Requires Fe(2+) as cofactor.

The protein localises to the cytoplasm. It catalyses the reaction L-threonylcarbamoyladenylate + adenosine(37) in tRNA = N(6)-L-threonylcarbamoyladenosine(37) in tRNA + AMP + H(+). Functionally, required for the formation of a threonylcarbamoyl group on adenosine at position 37 (t(6)A37) in tRNAs that read codons beginning with adenine. Is involved in the transfer of the threonylcarbamoyl moiety of threonylcarbamoyl-AMP (TC-AMP) to the N6 group of A37, together with TsaE and TsaB. TsaD likely plays a direct catalytic role in this reaction. The sequence is that of tRNA N6-adenosine threonylcarbamoyltransferase from Mesoplasma florum (strain ATCC 33453 / NBRC 100688 / NCTC 11704 / L1) (Acholeplasma florum).